The sequence spans 325 residues: Ribose-phosphate pyrophosphokinase (325 aa).

ATP-binding positions include 45 to 47 (NGE) and 104 to 105 (RQ). Mg(2+)-binding residues include histidine 138 and aspartate 178. The active site involves lysine 202. Residues arginine 204, aspartate 230, and 234–238 (DTGGT) contribute to the D-ribose 5-phosphate site.

It belongs to the ribose-phosphate pyrophosphokinase family. Class I subfamily. As to quaternary structure, homohexamer. It depends on Mg(2+) as a cofactor.

It localises to the cytoplasm. It carries out the reaction D-ribose 5-phosphate + ATP = 5-phospho-alpha-D-ribose 1-diphosphate + AMP + H(+). Its pathway is metabolic intermediate biosynthesis; 5-phospho-alpha-D-ribose 1-diphosphate biosynthesis; 5-phospho-alpha-D-ribose 1-diphosphate from D-ribose 5-phosphate (route I): step 1/1. In terms of biological role, involved in the biosynthesis of the central metabolite phospho-alpha-D-ribosyl-1-pyrophosphate (PRPP) via the transfer of pyrophosphoryl group from ATP to 1-hydroxyl of ribose-5-phosphate (Rib-5-P). The sequence is that of Ribose-phosphate pyrophosphokinase from Corynebacterium efficiens (strain DSM 44549 / YS-314 / AJ 12310 / JCM 11189 / NBRC 100395).